A 2871-amino-acid polypeptide reads, in one-letter code: Desmoplakin (2871 aa).

An interaction with PKP1, JUP, PKP2 region spans residues Met1 to Glu584. Residues Met1–Lys1056 are globular 1. Residues Ser22 and Ser53 each carry the phosphoserine modification. Tyr56 is modified (phosphotyrosine). At Thr61 the chain carries Phosphothreonine. A phosphoserine mark is found at Ser165, Ser166, and Ser176. 2 Spectrin repeats span residues Ser178–Gln271 and Leu272–Asn375. The Spectrin 3a repeat unit spans residues Ala376–Val446. The 58-residue stretch at Asn458–Pro515 folds into the SH3 domain. One copy of the Spectrin 3b repeat lies at Asn516–Lys545. Spectrin repeat units follow at residues Ser546–Pro627, Val654–Thr769, and Val770–Lys883. Residues Ser1018–Arg1945 are a coiled coil. The segment at Phe1057 to Arg1945 is central fibrous rod domain. Ser1658, Ser1708, and Ser2024 each carry phosphoserine. The interval Pro1946 to His2871 is globular 2. The interval Thr1960–Met2208 is 4.5 X 38 AA tandem repeats (Domain A). Plectin repeat units follow at residues Gln2009–Thr2045, Val2046–Arg2083, Gln2084–Gly2121, Met2122–Tyr2159, Asn2163–Gly2197, Leu2198–Val2233, Lys2251–Ala2288, Leu2289–Lys2326, Glu2327–Gly2364, Ile2365–Ser2402, Ser2406–Gly2440, Ser2456–Phe2493, Thr2507–Phe2544, Ser2610–Gly2647, Gln2648–Ala2685, Gln2724–Ala2761, and Gln2762–Gly2799. A phosphoserine mark is found at Ser2207, Ser2209, and Ser2225. A 4.5 X 38 AA tandem repeats (Domain B) region spans residues Asp2244 to Leu2446. The interval Phe2609–Ala2822 is 4.5 X 38 AA tandem repeats (Domain C). Residues Ser2810 and Ser2815 each carry the phosphoserine modification. Polar residues predominate over residues Ser2810–Pro2823. The tract at residues Ser2810–His2871 is disordered. The residue at position 2817 (Tyr2817) is a Phosphotyrosine. Phosphoserine is present on residues Ser2820, Ser2821, and Ser2825. Residues Gly2824–Arg2847 form a 6 X 4 AA tandem repeats of G-S-R-[SR] region. Positions Gly2824–Arg2847 are enriched in low complexity. Arg2826 and Arg2847 each carry omega-N-methylarginine. Ser2849 is modified (phosphoserine). Thr2853 carries the phosphothreonine modification. The segment covering Ser2856–His2871 has biased composition (low complexity). Ser2868 bears the Phosphoserine mark.

Belongs to the plakin or cytolinker family. As to quaternary structure, homodimer. Interacts with COL17A1 (via cytoplasmic region). Interacts with DSC2. Interacts with PKP2. Interacts with PKP1. Interacts weakly with TMEM65. In terms of processing, phosphorylation at Ser-2849 increases association with intermediate filament cytokeratin, potentially facilitating interaction between desmosome junctions and intermediate filament architecture. Expressed in oral mucosa (at protein level). Expressed in arrector pili muscle (at protein level). Expressed in the heart in the heart (at protein level). As to expression, apparently an obligate constituent of all desmosomes. In terms of tissue distribution, resides predominantly in tissues and cells of stratified origin.

The protein resides in the cell junction. The protein localises to the desmosome. It is found in the cell membrane. Its subcellular location is the cytoplasm. Functionally, major high molecular weight protein of desmosomes. Regulates profibrotic gene expression in cardiomyocytes via activation of the MAPK14/p38 MAPK signaling cascade and increase in TGFB1 protein abundance. The polypeptide is Desmoplakin (DSP) (Homo sapiens (Human)).